The primary structure comprises 435 residues: NADH-quinone oxidoreductase subunit D (435 aa).

Belongs to the complex I 49 kDa subunit family. NDH-1 is composed of 14 different subunits. Subunits NuoB, C, D, E, F, and G constitute the peripheral sector of the complex.

Its subcellular location is the cell inner membrane. The catalysed reaction is a quinone + NADH + 5 H(+)(in) = a quinol + NAD(+) + 4 H(+)(out). Its function is as follows. NDH-1 shuttles electrons from NADH, via FMN and iron-sulfur (Fe-S) centers, to quinones in the respiratory chain. The immediate electron acceptor for the enzyme in this species is believed to be ubiquinone. Couples the redox reaction to proton translocation (for every two electrons transferred, four hydrogen ions are translocated across the cytoplasmic membrane), and thus conserves the redox energy in a proton gradient. This is NADH-quinone oxidoreductase subunit D from Xylella fastidiosa (strain M12).